A 230-amino-acid chain; its full sequence is Lecithin retinol acyltransferase (230 aa).

The Cytoplasmic segment spans residues 1 to 194; the sequence is MKNPMLEVVS…VKIIIRDQRS (194 aa). In terms of domain architecture, LRAT spans 50 to 177; that stretch reads VLEVPRTHLT…CRYGTPISPQ (128 aa). Active-site residues include His60 and His72. Cys161 acts as the Acyl-thioester intermediate in catalysis. A helical membrane pass occupies residues 195 to 215; sequence VLASAVLGLASIVCTGLVSYT. Residues 216-230 lie on the Lumenal side of the membrane; that stretch reads TLPAIFIPFFLWMAG.

Belongs to the H-rev107 family. As to expression, hepatic stellate cells and endothelial cells (at protein level). Found at high levels in testis and liver, followed by retinal pigment epithelium, small intestine, prostate, pancreas and colon. Low expression observed in brain. In fetal tissues, expressed in retinal pigment epithelium and liver, and barely in the brain.

The protein localises to the endoplasmic reticulum membrane. It localises to the rough endoplasmic reticulum. Its subcellular location is the endosome. It is found in the multivesicular body. The protein resides in the cytoplasm. The protein localises to the perinuclear region. It carries out the reaction all-trans-retinol--[retinol-binding protein] + a 1,2-diacyl-sn-glycero-3-phosphocholine = apo--[retinol-binding protein] + an all-trans-retinyl ester + a 2-acyl-sn-glycero-3-phosphocholine. It catalyses the reaction 1,2-dihexadecanoyl-sn-glycero-3-phosphocholine + all-trans-retinol = all-trans-retinyl hexadecanoate + 2-hexadecanoyl-sn-glycero-3-phosphocholine. The enzyme catalyses 1,2-diheptanoyl-sn-glycero-3-phosphocholine + all-trans-retinol--[retinol-binding protein] = all-trans-retinyl heptanoate + 2-heptanoyl-sn-glycero-3-phosphocholine + apo--[retinol-binding protein]. The catalysed reaction is 1,2-dioctanoyl-sn-glycero-3-phosphocholine + all-trans-retinol--[retinol-binding protein] = 2-octanoyl-sn-glycero-3-phosphocholine + all-trans-retinyl octanoate + apo--[retinol-binding protein]. It carries out the reaction all-trans-retinol--[retinol-binding protein] + 1,2-dihexadecanoyl-sn-glycero-3-phosphocholine = apo--[retinol-binding protein] + all-trans-retinyl hexadecanoate + 2-hexadecanoyl-sn-glycero-3-phosphocholine. It catalyses the reaction 1,2-didodecanoyl-sn-glycero-3-phosphocholine + all-trans-retinol--[retinol-binding protein] = 2-dodecanoyl-sn-glycero-3-phosphocholine + all-trans-retinyl dodecanoate + apo--[retinol-binding protein]. Its pathway is cofactor metabolism; retinol metabolism. Inhibited by all-trans-retinyl alpha-bromoacetate and N-boc-L-biocytinyl-11-aminoundecane chloro-methyl ketone (BACMK). Transfers the acyl group from the sn-1 position of phosphatidylcholine to all-trans retinol, producing all-trans retinyl esters. Retinyl esters are storage forms of vitamin A. LRAT plays a critical role in vision. It provides the all-trans retinyl ester substrates for the isomerohydrolase which processes the esters into 11-cis-retinol in the retinal pigment epithelium; due to a membrane-associated alcohol dehydrogenase, 11 cis-retinol is oxidized and converted into 11-cis-retinaldehyde which is the chromophore for rhodopsin and the cone photopigments. Required for the survival of cone photoreceptors and correct rod photoreceptor cell morphology. This chain is Lecithin retinol acyltransferase, found in Homo sapiens (Human).